The sequence spans 151 residues: MEEAEKASQPHAGTALAFDFGEKRIGVAIGNLELGLAHPLVTLSNKNKEECLKSIARLMDEWKPVLLVVGLPVHADGTEHELTRRSRRFAHRLQARFGIRTVLEDERYTSISASSALDEASVRGRRQKQVLDQIAAQLILQSYFDQRNATT.

Belongs to the YqgF nuclease family.

The protein localises to the cytoplasm. In terms of biological role, could be a nuclease involved in processing of the 5'-end of pre-16S rRNA. The sequence is that of Putative pre-16S rRNA nuclease from Nitrosospira multiformis (strain ATCC 25196 / NCIMB 11849 / C 71).